The following is a 399-amino-acid chain: Phosphoglycerate kinase (399 aa).

Substrate is bound by residues 22 to 24, arginine 38, 61 to 64, arginine 119, and arginine 152; these read DFN and HLGR. Residues lysine 205, glycine 296, glutamate 327, and 353–356 contribute to the ATP site; that span reads GGDT.

Belongs to the phosphoglycerate kinase family. Monomer.

The protein localises to the cytoplasm. It catalyses the reaction (2R)-3-phosphoglycerate + ATP = (2R)-3-phospho-glyceroyl phosphate + ADP. The protein operates within carbohydrate degradation; glycolysis; pyruvate from D-glyceraldehyde 3-phosphate: step 2/5. The polypeptide is Phosphoglycerate kinase (Nitratiruptor sp. (strain SB155-2)).